The primary structure comprises 291 residues: Pyridoxal 5'-phosphate synthase subunit PdxS (291 aa).

Residue aspartate 23 coordinates D-ribose 5-phosphate. Catalysis depends on lysine 80, which acts as the Schiff-base intermediate with D-ribose 5-phosphate. Residue glycine 152 coordinates D-ribose 5-phosphate. Position 164 (arginine 164) interacts with D-glyceraldehyde 3-phosphate. Residues glycine 213 and 234 to 235 each bind D-ribose 5-phosphate; that span reads GS.

The protein belongs to the PdxS/SNZ family. As to quaternary structure, in the presence of PdxT, forms a dodecamer of heterodimers.

It carries out the reaction aldehydo-D-ribose 5-phosphate + D-glyceraldehyde 3-phosphate + L-glutamine = pyridoxal 5'-phosphate + L-glutamate + phosphate + 3 H2O + H(+). The protein operates within cofactor biosynthesis; pyridoxal 5'-phosphate biosynthesis. Catalyzes the formation of pyridoxal 5'-phosphate from ribose 5-phosphate (RBP), glyceraldehyde 3-phosphate (G3P) and ammonia. The ammonia is provided by the PdxT subunit. Can also use ribulose 5-phosphate and dihydroxyacetone phosphate as substrates, resulting from enzyme-catalyzed isomerization of RBP and G3P, respectively. This is Pyridoxal 5'-phosphate synthase subunit PdxS from Methanocorpusculum labreanum (strain ATCC 43576 / DSM 4855 / Z).